The sequence spans 92 residues: Small ribosomal subunit protein bS20 (92 aa).

The interval Met1 to Leu24 is disordered.

This sequence belongs to the bacterial ribosomal protein bS20 family.

Functionally, binds directly to 16S ribosomal RNA. The chain is Small ribosomal subunit protein bS20 from Paraburkholderia xenovorans (strain LB400).